A 540-amino-acid polypeptide reads, in one-letter code: Intestinal-type alkaline phosphatase 1 (540 aa).

An N-terminal signal peptide occupies residues 1-20; that stretch reads MQGDWVLLLLLGLRIHLSFG. A Mg(2+)-binding site is contributed by Asp-62. 2 residues coordinate Zn(2+): Asp-62 and Ser-112. The active-site Phosphoserine intermediate is Ser-112. Cys-141 and Cys-203 are disulfide-bonded. Asn-142 carries N-linked (GlcNAc...) asparagine glycosylation. Ser-175 contacts Mg(2+). Ca(2+) is bound by residues Glu-236, Phe-289, and Glu-290. An N-linked (GlcNAc...) asparagine glycan is attached at Asn-301. Asp-305 lines the Ca(2+) pocket. Residue Glu-331 coordinates Mg(2+). 4 residues coordinate Zn(2+): Asp-336, His-340, Asp-377, and His-378. An N-linked (GlcNAc...) asparagine glycan is attached at Asn-428. His-452 contacts Zn(2+). An intrachain disulfide couples Cys-487 to Cys-494. Asn-511 is lipidated: GPI-anchor amidated asparagine. Residues 512–540 constitute a propeptide, removed in mature form; it reads SAITMNNVLLSLQLLVSMLLLVGTALVVS.

It belongs to the alkaline phosphatase family. As to quaternary structure, homodimer. Mg(2+) serves as cofactor. The cofactor is Zn(2+). Requires Ca(2+) as cofactor.

The protein localises to the cell membrane. It catalyses the reaction a phosphate monoester + H2O = an alcohol + phosphate. Functionally, alkaline phosphatase that can hydrolyze various phosphate compounds. This is Intestinal-type alkaline phosphatase 1 (Alpi) from Rattus norvegicus (Rat).